A 113-amino-acid polypeptide reads, in one-letter code: uncharacterized protein (113 aa).

Residues 16-113 (TPFGYTLSLI…CEWGVKNQNN (98 aa)) form the HTH hxlR-type domain.

This is an uncharacterized protein from Halalkalibacterium halodurans (strain ATCC BAA-125 / DSM 18197 / FERM 7344 / JCM 9153 / C-125) (Bacillus halodurans).